The chain runs to 537 residues: uncharacterized protein (537 aa).

The next 6 helical transmembrane spans lie at 5-25 (IGLG…PWFV), 40-60 (LAVA…FFGW), 63-83 (VLWV…MAVV), 115-135 (GLYY…HLEG), 149-169 (VYLL…WVTL), and 197-217 (VGIV…ALVI).

It is found in the plastid. The protein resides in the chloroplast membrane. This is an uncharacterized protein from Ostreococcus tauri.